A 292-amino-acid chain; its full sequence is D-tagatose-1,6-bisphosphate aldolase subunit KbaY (292 aa).

Residue aspartate 82 is the Proton donor of the active site. Positions 83 and 180 each coordinate Zn(2+). Glycine 181 contributes to the dihydroxyacetone phosphate binding site. Histidine 208 contacts Zn(2+). Dihydroxyacetone phosphate contacts are provided by residues 209–211 and 230–233; these read GAS and NVAT.

It belongs to the class II fructose-bisphosphate aldolase family. TagBP aldolase KbaY subfamily. Homotetramer. Forms a complex with KbaZ. It depends on Zn(2+) as a cofactor.

The enzyme catalyses D-tagatofuranose 1,6-bisphosphate = D-glyceraldehyde 3-phosphate + dihydroxyacetone phosphate. The protein operates within carbohydrate metabolism; D-tagatose 6-phosphate degradation; D-glyceraldehyde 3-phosphate and glycerone phosphate from D-tagatose 6-phosphate: step 2/2. Functionally, catalytic subunit of the tagatose-1,6-bisphosphate aldolase KbaYZ, which catalyzes the reversible aldol condensation of dihydroxyacetone phosphate (DHAP or glycerone-phosphate) with glyceraldehyde 3-phosphate (G3P) to produce tagatose 1,6-bisphosphate (TBP). Requires KbaZ subunit for full activity and stability. This chain is D-tagatose-1,6-bisphosphate aldolase subunit KbaY, found in Enterobacter sp. (strain 638).